Consider the following 118-residue polypeptide: Large ribosomal subunit protein bL20 (118 aa).

This sequence belongs to the bacterial ribosomal protein bL20 family.

Its function is as follows. Binds directly to 23S ribosomal RNA and is necessary for the in vitro assembly process of the 50S ribosomal subunit. It is not involved in the protein synthesizing functions of that subunit. The protein is Large ribosomal subunit protein bL20 of Thermosipho africanus (strain TCF52B).